The primary structure comprises 491 residues: tRNA-2-methylthio-N(6)-dimethylallyladenosine synthase (491 aa).

One can recognise an MTTase N-terminal domain in the interval 54-172 (KTYHIKTFGC…ILNLLEQVIF (119 aa)). Cys-63, Cys-99, Cys-133, Cys-209, Cys-213, and Cys-216 together coordinate [4Fe-4S] cluster. Positions 195-426 (RTNNLKGFVN…NEMVKTFSKK (232 aa)) constitute a Radical SAM core domain. The TRAM domain occupies 429–491 (EKYVNKVLDV…RFTLNGKMID (63 aa)).

The protein belongs to the methylthiotransferase family. MiaB subfamily. Monomer. It depends on [4Fe-4S] cluster as a cofactor.

The protein localises to the cytoplasm. It catalyses the reaction N(6)-dimethylallyladenosine(37) in tRNA + (sulfur carrier)-SH + AH2 + 2 S-adenosyl-L-methionine = 2-methylsulfanyl-N(6)-dimethylallyladenosine(37) in tRNA + (sulfur carrier)-H + 5'-deoxyadenosine + L-methionine + A + S-adenosyl-L-homocysteine + 2 H(+). Catalyzes the methylthiolation of N6-(dimethylallyl)adenosine (i(6)A), leading to the formation of 2-methylthio-N6-(dimethylallyl)adenosine (ms(2)i(6)A) at position 37 in tRNAs that read codons beginning with uridine. The protein is tRNA-2-methylthio-N(6)-dimethylallyladenosine synthase of Malacoplasma penetrans (strain HF-2) (Mycoplasma penetrans).